Here is a 269-residue protein sequence, read N- to C-terminus: Probable membrane transporter protein YfcA (269 aa).

Residues 1–7 (METFNSL) lie on the Periplasmic side of the membrane. Residues 8–28 (FMVSPLLLGVLFFVAMLAGFI) form a helical membrane-spanning segment. At 29-30 (DS) the chain is on the cytoplasmic side. Residues 31 to 51 (IAGGGGLLTIPALMAAGMSPA) traverse the membrane as a helical segment. At 52-84 (NALATNKLQACGGSISATIYFIRRKVVSLSDQK) the chain is on the periplasmic side. A helical membrane pass occupies residues 85-105 (LNIAMTFVGSMSGALLVQYVQ). The Cytoplasmic segment spans residues 106-111 (ADVLRQ). The chain crosses the membrane as a helical span at residues 112–132 (ILPILVICIGLYFLLMPKLGE). Over 133–156 (EDRQRRMYGLPFALIAGGCVGFYD) the chain is Periplasmic. The helical transmembrane segment at 157 to 177 (GFFGPAAGSFYALAFVTLCGF) threads the bilayer. At 178–197 (NLAKATAHAKLLNATSNIGG) the chain is on the cytoplasmic side. A helical membrane pass occupies residues 198 to 218 (LLLFILGGKVIWATGFVMLVG). The Periplasmic portion of the chain corresponds to 219–269 (QFLGARMGSRLVLSKGQKLIRPMIVIVSAVMSAKLLYDSHGQEILHWLGMN).

It belongs to the 4-toluene sulfonate uptake permease (TSUP) (TC 2.A.102) family.

The protein localises to the cell inner membrane. The chain is Probable membrane transporter protein YfcA (yfcA) from Escherichia coli O157:H7.